A 351-amino-acid polypeptide reads, in one-letter code: Large ribosomal subunit protein uL3 (351 aa).

Disordered regions lie at residues 1 to 31 (MGHR…TPRT) and 246 to 271 (KGSR…GQLG).

The protein belongs to the universal ribosomal protein uL3 family. In terms of assembly, part of the 50S ribosomal subunit. Forms a cluster with proteins L14 and L24e.

Its function is as follows. One of the primary rRNA binding proteins, it binds directly near the 3'-end of the 23S rRNA, where it nucleates assembly of the 50S subunit. The sequence is that of Large ribosomal subunit protein uL3 from Saccharolobus islandicus (strain M.14.25 / Kamchatka #1) (Sulfolobus islandicus).